A 144-amino-acid polypeptide reads, in one-letter code: Large ribosomal subunit protein uL15 (144 aa).

The segment at 1 to 52 is disordered; that stretch reads MYLNTISPMKKSNHSSKRKGRGIGSGKGKTSGRGHKGQRSRSGGKVRRGFEG. Composition is skewed to basic residues over residues 11 to 21 and 30 to 47; these read KSNHSSKRKGR and TSGR…GKVR.

It belongs to the universal ribosomal protein uL15 family. Part of the 50S ribosomal subunit.

In terms of biological role, binds to the 23S rRNA. This Wigglesworthia glossinidia brevipalpis protein is Large ribosomal subunit protein uL15.